The following is a 146-amino-acid chain: MEMDKRIKSLAMTAFFGELNTLDIMALIMSIFKRHPNNTIFSVDKDGQFMIDFEYDNYKASQYLDLTLTPISGDECKTHASSIAEQLACADIIKEDISEYIKTTPRLKRFIKKYRNRSDTRISRDTEKLKIALAKGIDYEYIKDAC.

Residues 10-32 traverse the membrane as a helical segment; that stretch reads LAMTAFFGELNTLDIMALIMSIF.

This sequence belongs to the orthopoxvirus OPG112 family.

The protein localises to the host membrane. It localises to the host cytoplasm. In terms of biological role, contributes to the formation of crescents and immature virions (IV). Interacts with phosphatidylinositol-3-phosphate (PI3P) and phosphatidylinositol-4-phosphate (PI4P) lipids in order to form virion membranes. Mechanistically, mediates proper formation of OPG125-hexamers, and hence the honey comb lattice and spherical immature virus. In Homo sapiens (Human), this protein is Late protein OPG112 (OPG112).